Consider the following 177-residue polypeptide: Cytoglobin-1 (177 aa).

Residues 16-165 (PLTDKERVMI…LCCSIKAVYE (150 aa)) enclose the Globin domain. 2 residues coordinate heme b: histidine 79 and histidine 111.

The protein belongs to the globin family. As to quaternary structure, monomeric.

The protein localises to the cytoplasm. The protein resides in the nucleus. It carries out the reaction Fe(II)-heme b-[protein] + nitric oxide + O2 = Fe(III)-heme b-[protein] + nitrate. It catalyses the reaction Fe(III)-heme b-[protein] + nitric oxide + H2O = Fe(II)-heme b-[protein] + nitrite + 2 H(+). The catalysed reaction is 2 superoxide + 2 H(+) = H2O2 + O2. The enzyme catalyses H2O2 + AH2 = A + 2 H2O. Probable multifunctional globin with a hexacoordinated heme iron required for the catalysis of various reactions depending on redox condition of the cell as well as oxygen availability. Has a nitric oxide dioxygenase (NOD) activity and is most probably involved in cell-mediated and oxygen-dependent nitric oxide consumption. Under normoxic conditions functions as a nitric oxide dioxygenase (NOD) but under hypoxic conditions the globin may switch its function to that of a nitrite (NO2) reductase (NiR), generating nitric oxide. Could also have peroxidase and superoxide dismutase activities, detoxifying reactive oxygen species and protecting cells against oxidative stress. Also binds dioxygen with low affinity and could function as an oxygen sensor but has probably no function as a respiratory oxygen carrier. The chain is Cytoglobin-1 from Oryzias latipes (Japanese rice fish).